We begin with the raw amino-acid sequence, 194 residues long: Anaphase-promoting complex subunit CDC26 (194 aa).

The segment at 47 to 194 (EPMDQSEPPR…PSSNTRSHRH (148 aa)) is disordered. Polar residues-rich tracts occupy residues 79–94 (GECTRTSIAPTLTSAR) and 102–112 (LTLSTPVNPVS). Composition is skewed to low complexity over residues 154-166 (DESPTPSDSPESP) and 174-194 (TPGNPTSTSGGPSSNTRSHRH).

It belongs to the CDC26 family. The APC/C complex is probably composed of at least 12 subunits: apc-2, apc-10, apc-11, cdc-26, emb-1, emb-27, emb-30, mat-1, mat-2, mat-3, such-1 and gfi-3.

Its subcellular location is the nucleus. Its pathway is protein modification; protein ubiquitination. Its function is as follows. Probable component of the anaphase promoting complex/cyclosome (APC/C), a cell cycle-regulated E3 ubiquitin ligase that controls progression through mitosis and the G1 phase of the cell cycle. The APC/C complex acts by mediating ubiquitination and subsequent degradation of target proteins. Developmental role in early embryogenesis and the metaphase to anaphase transition in meiosis and mitosis. Required for embryonic anterior-posterior axis formation. The sequence is that of Anaphase-promoting complex subunit CDC26 from Caenorhabditis elegans.